The sequence spans 194 residues: HTH-type nicotine-responsive transcriptional repressor HdnoR (194 aa).

An HTH tetR-type domain is found at 6-66 (VDRRQQLIDA…AAAAELLQQL (61 aa)). Positions 29-48 (SLRTIASEAKASLAAVHVCF) form a DNA-binding region, H-T-H motif.

As to quaternary structure, homodimer.

6-hydroxy-D-nicotine and 6-hydroxy-L-nicotine prevent HdnoR from binding to the IR1 DNA. Both 6-hydroxy-nicotine enantiomers prevent DNA-protein complex formation at micromolar concentrations, with the D-enantiomer being twice as potent as the L-enantiomer. A thousand-fold higher L-nicotine concentration is required to elicit a similar effect. Its function is as follows. Represses expression of the 6-hydroxy-D-nicotine oxidase (6-hdno). Acts by binding to a gene operator site consisting of two inverted repeats, IR1 (covering the 6-hdno promoter region) and IR2 (situated upstream from the 6-hdno promoter). Binding to one site may stimulate binding of the protein to the second site. This Paenarthrobacter nicotinovorans (Arthrobacter nicotinovorans) protein is HTH-type nicotine-responsive transcriptional repressor HdnoR.